Here is a 590-residue protein sequence, read N- to C-terminus: Acyl-CoA ligase sidI (590 aa).

The PTS2-type peroxisomal targeting signal motif lies at 6 to 14 (RLQQTLSHL). ATP contacts are provided by residues 220–228 (TSGSTGNPK), 359–364 (SSYGLT), Asp449, and Arg464. Thr364 serves as a coordination point for substrate. CoA is bound by residues 472–474 (GGE) and 543–545 (YFF). Residue Lys563 coordinates ATP.

The protein belongs to the ATP-dependent AMP-binding enzyme family.

It is found in the peroxisome. Its pathway is siderophore biosynthesis. Acyl-CoA ligase; part of the siderophore biosynthetic pathway. Aspergillus fumigatus produces 4 types of siderophores, low-molecular-mass iron chelators, including excreted fusarinine C (FsC) and triacetylfusarinine C (TAFC) for iron uptake and intacellular ferricrocin (FC) for hyphal and hydroxyferricrocin (HFC) for conidial iron distribution and storage. TAFC consists of 3 N(2)-acetyl-N(5)-anhydromevalonyl-N(5)-hydroxyornithine residues cyclically linked by ester bonds; FC is a cyclic hexapeptide with the structure Gly-Ser-Gly-(N(5)-acetyl-N(5)-hydroxyornithine)x3. The biosynthesis of all four siderophores depends on the hydroxylation of ornithine, catalyzed by the monooxygenase sidA. Subsequently, the pathways for biosynthesis of extra- and intracellular siderophores split. For biosynthesis of extracellular siderophores, the transacylase sidF transfers anhydromevalonyl to N(5)-hydroxyornithine. The required anhydromevalonyl-CoA moiety is derived from mevalonate by CoA ligation and dehydration catalyzed by sidI and sidH respectively. The acetylation of N(5)-hydroxyornithine for FC biosynthesis involves the constitutively expressed sidL. FC is hydroxylated to HFC by an as yet uncharacterized enzyme during conidiation. Assembly of fusarinine C (FsC) and FC is catalyzed by two different nonribosomal peptide synthetases (NRPS), sidD and sidC respectively. Subsequently, sidG catalyzes N2-acetylation of FsC for forming TAFC. Both extra- and intracellular siderophores are crucial for growth during iron limitation and virulence. This chain is Acyl-CoA ligase sidI, found in Aspergillus fumigatus (strain ATCC MYA-4609 / CBS 101355 / FGSC A1100 / Af293) (Neosartorya fumigata).